A 276-amino-acid chain; its full sequence is Undecaprenyl-diphosphatase (276 aa).

The next 8 membrane-spanning stretches (helical) occupy residues 6 to 26 (IEILKVIFLGIVEGITEWLPI), 49 to 69 (EMFFVVIQLGAILAVVVMFWN), 89 to 109 (FSLWFKVAVACVPSAIMGILF), 117 to 137 (LHTPVVIAIMLILYGVLFIVI), 151 to 171 (LADISYKTALMIGVFQVLSLI), 181 to 201 (IIGALLIGVSRVAAAEFTFFL), 224 to 244 (AELLTLVIGMAVAFAVSVFVI), and 256 to 276 (FKVFGWYRIVLGILVLLITAI).

Belongs to the UppP family.

It is found in the cell membrane. The catalysed reaction is di-trans,octa-cis-undecaprenyl diphosphate + H2O = di-trans,octa-cis-undecaprenyl phosphate + phosphate + H(+). Catalyzes the dephosphorylation of undecaprenyl diphosphate (UPP). Confers resistance to bacitracin. The protein is Undecaprenyl-diphosphatase of Enterococcus faecalis (Streptococcus faecalis).